A 163-amino-acid polypeptide reads, in one-letter code: Globin CTT-V (163 aa).

Residues 1–16 form the signal peptide; that stretch reads MKFFAVLTLCIIGAIA. The Globin domain occupies 18–163; the sequence is PLTSDEANLV…YTVAFEVIPA (146 aa). Heme b contacts are provided by histidine 76 and histidine 111.

The protein belongs to the globin family.

This chain is Globin CTT-V (CTT-V), found in Chironomus thummi piger (Midge).